We begin with the raw amino-acid sequence, 250 residues long: Triosephosphate isomerase (250 aa).

9–11 (NWK) serves as a coordination point for substrate. The Electrophile role is filled by H96. The active-site Proton acceptor is the E168. Substrate-binding positions include G174, S216, and 237–238 (GG).

This sequence belongs to the triosephosphate isomerase family. As to quaternary structure, homodimer.

The protein localises to the cytoplasm. The enzyme catalyses D-glyceraldehyde 3-phosphate = dihydroxyacetone phosphate. It functions in the pathway carbohydrate biosynthesis; gluconeogenesis. It participates in carbohydrate degradation; glycolysis; D-glyceraldehyde 3-phosphate from glycerone phosphate: step 1/1. Its function is as follows. Involved in the gluconeogenesis. Catalyzes stereospecifically the conversion of dihydroxyacetone phosphate (DHAP) to D-glyceraldehyde-3-phosphate (G3P). The polypeptide is Triosephosphate isomerase (Leptospira interrogans serogroup Icterohaemorrhagiae serovar copenhageni (strain Fiocruz L1-130)).